A 219-amino-acid polypeptide reads, in one-letter code: RING finger protein nenya (219 aa).

The RING-type zinc finger occupies 6–48 (CNKCFRRRNVEPTLIFHMTQCQHVLCASCLSESSTDKKCPLCK). The segment at 161-181 (NQARGLRPRTPSVTTSDNTQS) is disordered.

May interact with itself, with narya and vilya through its RING-type zinc finger.

Required for the formation of DNA double-strand breaks together with narya and vilya during the meiotic recombination process. Plays a redundant role with narya in chromosome segregation during female meiosis. This chain is RING finger protein nenya, found in Drosophila melanogaster (Fruit fly).